We begin with the raw amino-acid sequence, 88 residues long: Small ribosomal subunit protein bS20 (88 aa).

Positions 1-27 (MANSKSAKKRALQSEKRRQHNASRRSM) are disordered.

This sequence belongs to the bacterial ribosomal protein bS20 family.

In terms of biological role, binds directly to 16S ribosomal RNA. The protein is Small ribosomal subunit protein bS20 of Shewanella denitrificans (strain OS217 / ATCC BAA-1090 / DSM 15013).